The sequence spans 133 residues: uncharacterized protein (133 aa).

Residues 36-56 (LPMLIALACIFLLLATCLLFM) form a helical membrane-spanning segment. The interval 105–133 (HGRPTVPRQPLPGPEDNRSHCDYMESTKM) is disordered. Residues 119 to 133 (EDNRSHCDYMESTKM) are compositionally biased toward basic and acidic residues.

Its subcellular location is the membrane. This is an uncharacterized protein from Homo sapiens (Human).